The following is a 187-amino-acid chain: Major allergen Equ c 1 (187 aa).

The segment at residues 1-15 (MKLLLLCLGLILVCA) is a signal peptide (or 16, or 21). N-linked (GlcNAc...) asparagine glycosylation is found at Asn-53 and Asn-68. The cysteines at positions 83 and 176 are disulfide-linked.

The protein belongs to the calycin superfamily. Lipocalin family. In terms of assembly, homodimer. Several N-terminal ends may be due to cleavage by signal peptidase at different sites or may be generated by proteolytic processing of the secreted protein. In terms of processing, analysis of the sugar composition shows the presence of GalNAc, Gal, NeuAc, GlcNAc, and Man. May be also O-glycosylated. In terms of tissue distribution, expressed in liver and in sublingual and submaxillary salivary glands. Highly concentrated in secretory fluid such as saliva and urine as well as in hair dandruff extract.

It is found in the secreted. The polypeptide is Major allergen Equ c 1 (Equus caballus (Horse)).